The chain runs to 344 residues: Acireductone dioxygenase (344 aa).

4 residues coordinate Fe(2+): His-92, His-94, Glu-98, and His-137. Residues His-92, His-94, Glu-98, and His-137 each coordinate Ni(2+).

The protein belongs to the acireductone dioxygenase (ARD) family. The cofactor is Fe(2+). Requires Ni(2+) as cofactor.

The protein localises to the cytoplasm. It is found in the nucleus. The enzyme catalyses 1,2-dihydroxy-5-(methylsulfanyl)pent-1-en-3-one + O2 = 4-methylsulfanyl-2-oxobutanoate + formate + 2 H(+). It catalyses the reaction 1,2-dihydroxy-5-(methylsulfanyl)pent-1-en-3-one + O2 = 3-(methylsulfanyl)propanoate + CO + formate + 2 H(+). It functions in the pathway amino-acid biosynthesis; L-methionine biosynthesis via salvage pathway; L-methionine from S-methyl-5-thio-alpha-D-ribose 1-phosphate: step 5/6. Catalyzes 2 different reactions between oxygen and the acireductone 1,2-dihydroxy-3-keto-5-methylthiopentene (DHK-MTPene) depending upon the metal bound in the active site. Fe-containing acireductone dioxygenase (Fe-ARD) produces formate and 2-keto-4-methylthiobutyrate (KMTB), the alpha-ketoacid precursor of methionine in the methionine recycle pathway. Ni-containing acireductone dioxygenase (Ni-ARD) produces methylthiopropionate, carbon monoxide and formate, and does not lie on the methionine recycle pathway. This Leishmania braziliensis protein is Acireductone dioxygenase.